The primary structure comprises 1606 residues: E3 ubiquitin-protein ligase HECW1 (1606 aa).

The 137-residue stretch at 182–318 (SAAPIFKSIG…LERHAIGDRV (137 aa)) folds into the C2 domain. Disordered stretches follow at residues 349–418 (DDEE…PAEE), 459–538 (AEQL…CSLP), 566–672 (LLHS…SCEG), and 730–815 (STVF…SQLP). Polar residues predominate over residues 354 to 373 (SLSTEPESAQIQDSPMNNLM). Positions 380 to 392 (PRSEAPESSESWK) are enriched in basic and acidic residues. Acidic residues-rich tracts occupy residues 500 to 511 (EEEEKEQEEEGD) and 579 to 588 (AEEEDGAEEE). A compositionally biased stretch (basic and acidic residues) spans 589-600 (STLKDSSEKDGL). Residues 612-621 (ALEEDREEPE) show a composition bias toward acidic residues. Polar residues-rich tracts occupy residues 651 to 663 (HPST…SSPR), 751 to 765 (DSMQ…STNG), and 806 to 815 (HNSQPVSQLP). In terms of domain architecture, WW 1 spans 829–862 (EPLPPNWEARIDSHGRVFYVDHVNRTTTWQRPTA). Positions 870–901 (RRSGSIQQMEQLNRRYQNIQRTIATERSEEDS) form a coiled coil. Phosphoserine occurs at positions 874, 937, and 939. Residues 894–938 (TERSEEDSGSQSCEQAPAGGGGGGGSDSEAESSQSSLDLRREGSL) are disordered. One can recognise a WW 2 domain in the interval 1018 to 1051 (LELPRGWEIKTDQQGKSFFVDHNSRATTFIDPRI). Residues 1271–1606 (SRKELQRNKL…VEETSTFGLE (336 aa)) form the HECT domain. Cysteine 1574 (glycyl thioester intermediate) is an active-site residue.

In terms of assembly, interacts with DVL1 and SSR3. Also interacts with mutant SOD1. As to expression, predominantly expressed in neurons of adult and fetal brain. Weakly expressed in the kidney.

It localises to the cytoplasm. The catalysed reaction is S-ubiquitinyl-[E2 ubiquitin-conjugating enzyme]-L-cysteine + [acceptor protein]-L-lysine = [E2 ubiquitin-conjugating enzyme]-L-cysteine + N(6)-ubiquitinyl-[acceptor protein]-L-lysine.. It functions in the pathway protein modification; protein ubiquitination. Functionally, E3 ubiquitin-protein ligase that mediates ubiquitination and subsequent degradation of DVL1. Also targets the mutant SOD1 protein involved in familial amyotrophic lateral sclerosis (FALS). Forms cytotoxic aggregates with DVL1, SSR3 and mutant SOD1 that lead to motor neuron death in FALS. This chain is E3 ubiquitin-protein ligase HECW1 (HECW1), found in Homo sapiens (Human).